Consider the following 382-residue polypeptide: D-galactonate dehydratase (382 aa).

Position 183 (aspartate 183) interacts with Mg(2+). The Proton donor role is filled by histidine 185. Residues glutamate 209 and glutamate 235 each coordinate Mg(2+). The active-site Proton acceptor is the histidine 285. Residues 361–382 (NENPPDWRNPVWRHSDGSIAEW) are disordered.

The protein belongs to the mandelate racemase/muconate lactonizing enzyme family. GalD subfamily. Mg(2+) serves as cofactor.

It carries out the reaction D-galactonate = 2-dehydro-3-deoxy-D-galactonate + H2O. Its pathway is carbohydrate acid metabolism; D-galactonate degradation; D-glyceraldehyde 3-phosphate and pyruvate from D-galactonate: step 1/3. In terms of biological role, catalyzes the dehydration of D-galactonate to 2-keto-3-deoxy-D-galactonate. The protein is D-galactonate dehydratase of Xanthomonas axonopodis pv. citri (strain 306).